Reading from the N-terminus, the 321-residue chain is tRNA(Ile)-lysidine synthase (321 aa).

Residue 30-35 (SGGSDS) participates in ATP binding.

Belongs to the tRNA(Ile)-lysidine synthase family.

It is found in the cytoplasm. The catalysed reaction is cytidine(34) in tRNA(Ile2) + L-lysine + ATP = lysidine(34) in tRNA(Ile2) + AMP + diphosphate + H(+). Its function is as follows. Ligates lysine onto the cytidine present at position 34 of the AUA codon-specific tRNA(Ile) that contains the anticodon CAU, in an ATP-dependent manner. Cytidine is converted to lysidine, thus changing the amino acid specificity of the tRNA from methionine to isoleucine. The protein is tRNA(Ile)-lysidine synthase of Chlamydia trachomatis serovar A (strain ATCC VR-571B / DSM 19440 / HAR-13).